The following is an 87-amino-acid chain: U3-theraphotoxin-Hhn1e (87 aa).

The signal sequence occupies residues 1–24; that stretch reads MVNMKASMFLTFAGLVLLFVVCYA. A propeptide spanning residues 25-52 is cleaved from the precursor; it reads SESEEKEFPKGMLSSIFAVDNDFKQEER. Disulfide bonds link Cys-54/Cys-67, Cys-61/Cys-72, and Cys-66/Cys-79.

Belongs to the neurotoxin 10 (Hwtx-1) family. 51 (Hntx-8) subfamily. Hntx-8 sub-subfamily. Expressed by the venom gland.

The protein resides in the secreted. In terms of biological role, ion channel inhibitor. The sequence is that of U3-theraphotoxin-Hhn1e from Cyriopagopus hainanus (Chinese bird spider).